Here is a 420-residue protein sequence, read N- to C-terminus: D-tagatose-1,6-bisphosphate aldolase subunit GatZ (420 aa).

Belongs to the GatZ/KbaZ family. GatZ subfamily. Forms a complex with GatY.

The protein operates within carbohydrate metabolism; D-tagatose 6-phosphate degradation; D-glyceraldehyde 3-phosphate and glycerone phosphate from D-tagatose 6-phosphate: step 2/2. Functionally, component of the tagatose-1,6-bisphosphate aldolase GatYZ that is required for full activity and stability of the Y subunit. Could have a chaperone-like function for the proper and stable folding of GatY. When expressed alone, GatZ does not show any aldolase activity. Is involved in the catabolism of galactitol. The sequence is that of D-tagatose-1,6-bisphosphate aldolase subunit GatZ from Escherichia coli (strain SMS-3-5 / SECEC).